The following is a 176-amino-acid chain: Large ribosomal subunit protein uL6 (176 aa).

A compositionally biased stretch (basic and acidic residues) spans 151–170 (RPPEPYKGKGVRYADEQVRR). Residues 151 to 176 (RPPEPYKGKGVRYADEQVRRKEAKKK) form a disordered region.

The protein belongs to the universal ribosomal protein uL6 family. In terms of assembly, part of the 50S ribosomal subunit.

Functionally, this protein binds to the 23S rRNA, and is important in its secondary structure. It is located near the subunit interface in the base of the L7/L12 stalk, and near the tRNA binding site of the peptidyltransferase center. In Shewanella piezotolerans (strain WP3 / JCM 13877), this protein is Large ribosomal subunit protein uL6.